Here is a 147-residue protein sequence, read N- to C-terminus: MKTITIKVKRLHSKAMLPAYMSPHAAGMDLYACPDGEVVVKPGCRTIVPTGIALAIPVGYEGQVRPRSGLALHHGVTLVNTPGTIDADYRGELGIIIINHGDEDFVVSPGDRIAQLVIAPVHRAVLETVEELDETDRNEGGFGHTGF.

Substrate contacts are provided by residues 67–69 (RSG), asparagine 80, and 84–86 (TID).

It belongs to the dUTPase family. Mg(2+) serves as cofactor.

The catalysed reaction is dUTP + H2O = dUMP + diphosphate + H(+). Its pathway is pyrimidine metabolism; dUMP biosynthesis; dUMP from dCTP (dUTP route): step 2/2. Its function is as follows. This enzyme is involved in nucleotide metabolism: it produces dUMP, the immediate precursor of thymidine nucleotides and it decreases the intracellular concentration of dUTP so that uracil cannot be incorporated into DNA. The protein is Deoxyuridine 5'-triphosphate nucleotidohydrolase of Syntrophotalea carbinolica (strain DSM 2380 / NBRC 103641 / GraBd1) (Pelobacter carbinolicus).